The chain runs to 146 residues: Hemoglobin subunit beta (146 aa).

The Globin domain occupies 2-146 (HWTAEEKQLI…VAHALARKYH (145 aa)). The heme b site is built by His63 and His92.

It belongs to the globin family. In terms of assembly, heterotetramer of two alpha chains and two beta chains. As to expression, red blood cells.

Functionally, involved in oxygen transport from the lung to the various peripheral tissues. This is Hemoglobin subunit beta (HBB) from Chloephaga melanoptera (Andean goose).